The following is a 1385-amino-acid chain: DNA-directed RNA polymerase subunit beta' (1385 aa).

4 residues coordinate Zn(2+): Cys-72, Cys-74, Cys-87, and Cys-90. 3 residues coordinate Mg(2+): Asp-467, Asp-469, and Asp-471. Zn(2+) is bound by residues Cys-829, Cys-910, Cys-917, and Cys-920.

The protein belongs to the RNA polymerase beta' chain family. As to quaternary structure, the RNAP catalytic core consists of 2 alpha, 1 beta, 1 beta' and 1 omega subunit. When a sigma factor is associated with the core the holoenzyme is formed, which can initiate transcription. Mg(2+) serves as cofactor. It depends on Zn(2+) as a cofactor.

The catalysed reaction is RNA(n) + a ribonucleoside 5'-triphosphate = RNA(n+1) + diphosphate. DNA-dependent RNA polymerase catalyzes the transcription of DNA into RNA using the four ribonucleoside triphosphates as substrates. The protein is DNA-directed RNA polymerase subunit beta' of Elusimicrobium minutum (strain Pei191).